A 152-amino-acid chain; its full sequence is Superoxide dismutase [Cu-Zn] (152 aa).

H45, H47, and H62 together coordinate Cu cation. C56 and C145 are oxidised to a cystine. Zn(2+)-binding residues include H62, H70, H79, and D82. A Cu cation-binding site is contributed by H119.

Belongs to the Cu-Zn superoxide dismutase family. In terms of assembly, homodimer. Cu cation is required as a cofactor. The cofactor is Zn(2+).

Its subcellular location is the cytoplasm. The catalysed reaction is 2 superoxide + 2 H(+) = H2O2 + O2. Functionally, destroys radicals which are normally produced within the cells and which are toxic to biological systems. This chain is Superoxide dismutase [Cu-Zn] (SODCC), found in Capsicum annuum (Capsicum pepper).